A 508-amino-acid polypeptide reads, in one-letter code: Ribonuclease Y (508 aa).

A helical transmembrane segment spans residues 1–21 (MMLWYIVAGAGGLLIGYLIAN). Positions 198–283 (TVSTVSLPSD…EMYEKAKQEV (86 aa)) constitute a KH domain. The HD domain maps to 324–417 (VLNHSIEVAL…VAAADALSAA (94 aa)).

This sequence belongs to the RNase Y family.

The protein localises to the cell membrane. Endoribonuclease that initiates mRNA decay. In Thermotoga maritima (strain ATCC 43589 / DSM 3109 / JCM 10099 / NBRC 100826 / MSB8), this protein is Ribonuclease Y.